Consider the following 352-residue polypeptide: N-acetyl-gamma-glutamyl-phosphate reductase (352 aa).

The active site involves Cys-155.

Belongs to the NAGSA dehydrogenase family. Type 1 subfamily.

It is found in the cytoplasm. The enzyme catalyses N-acetyl-L-glutamate 5-semialdehyde + phosphate + NADP(+) = N-acetyl-L-glutamyl 5-phosphate + NADPH + H(+). It participates in amino-acid biosynthesis; L-arginine biosynthesis; N(2)-acetyl-L-ornithine from L-glutamate: step 3/4. Catalyzes the NADPH-dependent reduction of N-acetyl-5-glutamyl phosphate to yield N-acetyl-L-glutamate 5-semialdehyde. In Picosynechococcus sp. (strain ATCC 27264 / PCC 7002 / PR-6) (Agmenellum quadruplicatum), this protein is N-acetyl-gamma-glutamyl-phosphate reductase.